We begin with the raw amino-acid sequence, 240 residues long: Octanoyltransferase (240 aa).

The disordered stretch occupies residues 1 to 22 (MGTTGTNDGATTPPANTSTPAV). Residues 10 to 21 (ATTPPANTSTPA) show a composition bias toward low complexity. In terms of domain architecture, BPL/LPL catalytic spans 51–236 (EKIPDTILLL…NLVDALNGDL (186 aa)). Substrate contacts are provided by residues 89 to 96 (RGGRITWH), 166 to 168 (AIG), and 179 to 181 (GVA). The active-site Acyl-thioester intermediate is Cys-197.

The protein belongs to the LipB family.

It is found in the cytoplasm. It catalyses the reaction octanoyl-[ACP] + L-lysyl-[protein] = N(6)-octanoyl-L-lysyl-[protein] + holo-[ACP] + H(+). Its pathway is protein modification; protein lipoylation via endogenous pathway; protein N(6)-(lipoyl)lysine from octanoyl-[acyl-carrier-protein]: step 1/2. Catalyzes the transfer of endogenously produced octanoic acid from octanoyl-acyl-carrier-protein onto the lipoyl domains of lipoate-dependent enzymes. Lipoyl-ACP can also act as a substrate although octanoyl-ACP is likely to be the physiological substrate. The sequence is that of Octanoyltransferase from Corynebacterium jeikeium (strain K411).